The following is a 270-amino-acid chain: Undecaprenyl-diphosphatase (270 aa).

7 consecutive transmembrane segments (helical) span residues 1–21, 92–112, 119–139, 150–170, 193–213, 223–243, and 250–270; these read MTWW…FIPV, FRLG…YVLF, AFGS…LLLL, LSGV…VPGI, FSFL…GLEL, LSLG…IYVV, and GNLQ…LWLL.

The protein belongs to the UppP family.

It is found in the cell inner membrane. The catalysed reaction is di-trans,octa-cis-undecaprenyl diphosphate + H2O = di-trans,octa-cis-undecaprenyl phosphate + phosphate + H(+). Its function is as follows. Catalyzes the dephosphorylation of undecaprenyl diphosphate (UPP). Confers resistance to bacitracin. The protein is Undecaprenyl-diphosphatase of Salinibacter ruber (strain DSM 13855 / M31).